Consider the following 872-residue polypeptide: Protein SEY1 (872 aa).

At 1 to 749 (MVANGHFAGV…KRSAIGGITQ (749 aa)) the chain is on the cytoplasmic side. In terms of domain architecture, GB1/RHD3-type G spans 49 to 307 (GFNYHLISVF…IPADGFAVYA (259 aa)). A GTP-binding site is contributed by 59-66 (GSQSTGKS). A coiled-coil region spans residues 482-504 (SNYQQELSLYQKDLENIGGQLRR). Positions 676 to 704 (LDKWIGHTPSSATPADEEDLTPIGGVDED) are disordered. Over residues 690 to 704 (ADEEDLTPIGGVDED) the composition is skewed to acidic residues. The chain crosses the membrane as a helical span at residues 750-770 (VPLYFYGLLLALGWNEIVAVL). Residues 771–773 (RNP) are Lumenal-facing. A helical transmembrane segment spans residues 774–794 (AYFLLLFVCAVTAYVTYQLNL). Over 795 to 872 (WGPIIKMTEA…IDDADDDDDF (78 aa)) the chain is Cytoplasmic. The segment at 849 to 872 (NRKSAGGFQNNRSHIDDADDDDDF) is disordered.

Belongs to the TRAFAC class dynamin-like GTPase superfamily. GB1/RHD3 GTPase family. RHD3 subfamily.

It localises to the endoplasmic reticulum membrane. Functionally, cooperates with the reticulon proteins and tubule-shaping DP1 family proteins to generate and maintain the structure of the tubular endoplasmic reticulum network. Has GTPase activity, which is required for its function in ER organization. The sequence is that of Protein SEY1 from Paracoccidioides brasiliensis (strain Pb18).